The following is a 279-amino-acid chain: Pantothenate synthetase (279 aa).

26–33 (MGNLHDGH) contributes to the ATP binding site. His33 acts as the Proton donor in catalysis. (R)-pantoate is bound at residue Gln57. Beta-alanine is bound at residue Gln57. Residue 144–147 (GKKD) participates in ATP binding. A (R)-pantoate-binding site is contributed by Gln150. ATP contacts are provided by residues Val173 and 181-184 (LSSR).

It belongs to the pantothenate synthetase family. In terms of assembly, homodimer.

The protein localises to the cytoplasm. It catalyses the reaction (R)-pantoate + beta-alanine + ATP = (R)-pantothenate + AMP + diphosphate + H(+). The protein operates within cofactor biosynthesis; (R)-pantothenate biosynthesis; (R)-pantothenate from (R)-pantoate and beta-alanine: step 1/1. Its function is as follows. Catalyzes the condensation of pantoate with beta-alanine in an ATP-dependent reaction via a pantoyl-adenylate intermediate. The sequence is that of Pantothenate synthetase from Burkholderia mallei (strain NCTC 10229).